A 479-amino-acid chain; its full sequence is Ribosomal RNA small subunit methyltransferase F (479 aa).

Residues 125–131 (AAAPGSK), E149, D176, and D194 each bind S-adenosyl-L-methionine. Catalysis depends on C247, which acts as the Nucleophile.

Belongs to the class I-like SAM-binding methyltransferase superfamily. RsmB/NOP family.

Its subcellular location is the cytoplasm. It catalyses the reaction cytidine(1407) in 16S rRNA + S-adenosyl-L-methionine = 5-methylcytidine(1407) in 16S rRNA + S-adenosyl-L-homocysteine + H(+). Functionally, specifically methylates the cytosine at position 1407 (m5C1407) of 16S rRNA. In Salmonella schwarzengrund (strain CVM19633), this protein is Ribosomal RNA small subunit methyltransferase F.